We begin with the raw amino-acid sequence, 335 residues long: MIEKIWFDNHILGKLMWPLLWPLSCLFKYVANKKKLDYFTGKKTAYKSSVPVVVVGNITAGGNGKTPVVVWLVEQLQLQGMKVGVASRGYGGKAPHYPYLLSNTTTPDISGDEPVLIKQRTKAHVAVAPVRSEAVKMLEEQGVDIVITDDGLQHYALQRDVEFIVIDGKRRFGNQAFIPLGPLREGLDRLASVDFLICNGEQPKTNEIAMTLEPSKAVNLVTGEKKSVSNLGELVAFAGIGHPPRFFDTLASLNADVVHTQGFVDHKAFEPEEIKNLMQYGEQLIMTEKDAVKCQSFAESSWWYLPVDASFPEEKAQQILNKIIEVKEQYGLSSS.

Residue 59–66 coordinates ATP; sequence TAGGNGKT.

Belongs to the LpxK family.

The catalysed reaction is a lipid A disaccharide + ATP = a lipid IVA + ADP + H(+). The protein operates within glycolipid biosynthesis; lipid IV(A) biosynthesis; lipid IV(A) from (3R)-3-hydroxytetradecanoyl-[acyl-carrier-protein] and UDP-N-acetyl-alpha-D-glucosamine: step 6/6. Its function is as follows. Transfers the gamma-phosphate of ATP to the 4'-position of a tetraacyldisaccharide 1-phosphate intermediate (termed DS-1-P) to form tetraacyldisaccharide 1,4'-bis-phosphate (lipid IVA). The polypeptide is Tetraacyldisaccharide 4'-kinase (Aliivibrio salmonicida (strain LFI1238) (Vibrio salmonicida (strain LFI1238))).